The chain runs to 473 residues: Aspartyl/glutamyl-tRNA(Asn/Gln) amidotransferase subunit B (473 aa).

The protein belongs to the GatB/GatE family. GatB subfamily. Heterotrimer of A, B and C subunits.

The catalysed reaction is L-glutamyl-tRNA(Gln) + L-glutamine + ATP + H2O = L-glutaminyl-tRNA(Gln) + L-glutamate + ADP + phosphate + H(+). The enzyme catalyses L-aspartyl-tRNA(Asn) + L-glutamine + ATP + H2O = L-asparaginyl-tRNA(Asn) + L-glutamate + ADP + phosphate + 2 H(+). Its function is as follows. Allows the formation of correctly charged Asn-tRNA(Asn) or Gln-tRNA(Gln) through the transamidation of misacylated Asp-tRNA(Asn) or Glu-tRNA(Gln) in organisms which lack either or both of asparaginyl-tRNA or glutaminyl-tRNA synthetases. The reaction takes place in the presence of glutamine and ATP through an activated phospho-Asp-tRNA(Asn) or phospho-Glu-tRNA(Gln). This chain is Aspartyl/glutamyl-tRNA(Asn/Gln) amidotransferase subunit B, found in Francisella tularensis subsp. novicida (strain U112).